A 623-amino-acid chain; its full sequence is Zinc finger protein 131 (623 aa).

The region spanning 34-98 (TDITLIVDGH…TYTAKLMIQG (65 aa)) is the BTB domain. The Nuclear localization signal 1 signature appears at 137–148 (TGKNEAKKRKIA). C2H2-type zinc fingers lie at residues 261–283 (FHCE…MKSH), 288–311 (FKCE…NCYH), and 328–350 (HVCQ…LRKH). Residues Lys-289 and Lys-295 each participate in a glycyl lysine isopeptide (Lys-Gly) (interchain with G-Cter in SUMO2) cross-link. The Nuclear localization signal 2 signature appears at 317-328 (VSKKQRTGKKIH). Residues 356–381 (FECPNCHERFARNSTLKCHLTACQTG) form a C2H2-type 4; degenerate zinc finger. 2 C2H2-type zinc fingers span residues 392–414 (YECQ…LVIH) and 420–443 (NHCT…SDAH). A compositionally biased stretch (basic and acidic residues) spans 573 to 617 (NQEERESSQADAAEAAREDHEDAEDLETKPTVDSEAEKAENEDRT). A disordered region spans residues 573 to 623 (NQEERESSQADAAEAAREDHEDAEDLETKPTVDSEAEKAENEDRTALPVLE). Lys-601 is covalently cross-linked (Glycyl lysine isopeptide (Lys-Gly) (interchain with G-Cter in SUMO)).

Belongs to the krueppel C2H2-type zinc-finger protein family. Monosumoylated at Lys-601 by CBX4 and UHRF2. Sumoylation may potentiate ZNF131 inhibition of estrogen signaling. Sumoylation does not interfere with ubiquitination. Post-translationally, ubiquitinated. In terms of tissue distribution, predominant expression is found in different brain areas such as the occipital and temporal lobe, the nucleus caudatus, hippocampus, and the cerebellum as well as in testis and thymus.

Its subcellular location is the nucleus. Plays a role during development and organogenesis as well as in the function of the adult central nervous system. May be involved in transcriptional regulation as a repressor of ESR1/ER-alpha signaling. The protein is Zinc finger protein 131 (ZNF131) of Homo sapiens (Human).